Consider the following 338-residue polypeptide: Galaxin (338 aa).

The signal sequence occupies residues 1-23 (MKPSGAFLSLCVVLLSLATHCFS). A compositionally biased stretch (basic and acidic residues) spans 30–47 (RRDAHSDTNALKSRDRRQ). Residues 30 to 50 (RRDAHSDTNALKSRDRRQAPA) are disordered.

Component of the acid-insoluble organic matrix of the aragonitic skeleton (at protein level). Initially, expressed in an aboral submarginal ring and then along calcifying septa.

Its subcellular location is the secreted. The protein is Galaxin of Acropora millepora (Staghorn coral).